Consider the following 860-residue polypeptide: Leucine--tRNA ligase (860 aa).

Positions 42–52 (PYPSGRLHMGH) match the 'HIGH' region motif. The short motif at 619-623 (KMSKS) is the 'KMSKS' region element. Lys622 is an ATP binding site.

It belongs to the class-I aminoacyl-tRNA synthetase family.

It is found in the cytoplasm. The enzyme catalyses tRNA(Leu) + L-leucine + ATP = L-leucyl-tRNA(Leu) + AMP + diphosphate. This chain is Leucine--tRNA ligase, found in Salmonella enteritidis PT4 (strain P125109).